Reading from the N-terminus, the 71-residue chain is Small ribosomal subunit protein bS21 (71 aa).

This sequence belongs to the bacterial ribosomal protein bS21 family.

This Buchnera aphidicola subsp. Acyrthosiphon pisum (strain 5A) protein is Small ribosomal subunit protein bS21.